A 1863-amino-acid chain; its full sequence is 5'-3' DNA helicase ZGRF1 (1863 aa).

Disordered regions lie at residues 78 to 110 (SRAV…QPSG), 132 to 196 (ENSE…PLSL), and 300 to 349 (TQSI…PEAQ). Basic and acidic residues predominate over residues 81 to 90 (VEPDGSREAL). The span at 92 to 105 (SGSRTLVSSSRSLG) shows a compositional bias: low complexity. Polar residues-rich tracts occupy residues 173–185 (PVST…ITFS) and 300–321 (TQSI…TTSR). 2 positions are modified to phosphoserine: serine 331 and serine 445. 3 disordered regions span residues 460 to 496 (PVSP…SKSN), 524 to 545 (TSDT…ERWE), and 610 to 664 (GDVK…GVSP). The span at 533–545 (EDSRLSQDSERWE) shows a compositional bias: basic and acidic residues. 4 residues coordinate Zn(2+): cysteine 1111, histidine 1113, cysteine 1136, and cysteine 1144. Residues 1111–1153 (CHHNQPAKLVMVKKEGPNKGRLFYTCDKSKDNQCKFFKWLEEV) form a GRF-type zinc finger.

In terms of assembly, interacts with DNA repair protein RAD51; the interaction promotes RAD51 strand exchange activity. Also interacts with DNA repair proteins EXO1 and BRCA1; the interactions are increased following DNA damage induction.

It localises to the nucleus. It carries out the reaction ATP + H2O = ADP + phosphate + H(+). The catalysed reaction is Couples ATP hydrolysis with the unwinding of duplex DNA at the replication fork by translocating in the 5'-3' direction. This creates two antiparallel DNA single strands (ssDNA). The leading ssDNA polymer is the template for DNA polymerase III holoenzyme which synthesizes a continuous strand.. In terms of biological role, 5'-3' DNA helicase which is recruited to sites of DNA damage and promotes repair of replication-blocking DNA lesions through stimulation of homologous recombination (HR). Promotes HR by directly stimulating RAD51-mediated strand exchange activity. Not required to load RAD51 at sites of DNA damage but promotes recombinational repair after RAD51 recruitment. Also promotes HR by positively regulating EXO1-mediated DNA end resection of DNA double-strand breaks. Required for recruitment of replication protein RPA2 to DNA damage sites. Promotes the initiation of the G2/M checkpoint but not its maintenance. Catalyzes Holliday junction branch migration and dissociation of D-loops and DNA flaps. This Mus musculus (Mouse) protein is 5'-3' DNA helicase ZGRF1 (Zgrf1).